The primary structure comprises 403 residues: Eukaryotic initiation factor 4A (403 aa).

Positions Met-1–Val-20 are disordered. The Q motif signature appears at Asp-30–Gln-58. The Helicase ATP-binding domain occupies Ile-61–Ile-231. Residue Ala-74 to Thr-81 coordinates ATP. Positions Asp-179–Asp-182 match the DEAD box motif. The Helicase C-terminal domain occupies Gly-242–Ile-403.

This sequence belongs to the DEAD box helicase family. eIF4A subfamily. As to quaternary structure, eIF4F is a multi-subunit complex, the composition of which varies with external and internal environmental conditions. It is composed of at least eIF4A, eIF4E1 and eIF4G1. Interacts with tud and vas. Interacts (via multiple contacts) with bam; the interaction is direct.

It is found in the cytoplasm. Its subcellular location is the cytoplasmic ribonucleoprotein granule. The catalysed reaction is ATP + H2O = ADP + phosphate + H(+). Its function is as follows. ATP-dependent RNA helicase which is a subunit of the eIF4F complex involved in cap recognition and is required for mRNA binding to ribosome. In the current model of translation initiation, eIF4A unwinds RNA secondary structures in the 5'-UTR of mRNAs which is necessary to allow efficient binding of the small ribosomal subunit, and subsequent scanning for the initiator codon. As a result, promotes cell proliferation and growth. Binds and antagonises the bam-bgcn complex; probably prevents bam mediated translational repression of shg/E-cadherin. Involved in germ cell formation. Involved in germline stem cell maintenance and proliferation; prevents differentiation. In Drosophila melanogaster (Fruit fly), this protein is Eukaryotic initiation factor 4A.